Reading from the N-terminus, the 172-residue chain is Co-chaperone protein HscB homolog (172 aa).

In terms of domain architecture, J spans 2 to 74 (NHFELFGLVE…LRRAEYLLSL (73 aa)).

The protein belongs to the HscB family. In terms of assembly, interacts with HscA and stimulates its ATPase activity.

Co-chaperone involved in the maturation of iron-sulfur cluster-containing proteins. Seems to help targeting proteins to be folded toward HscA. The chain is Co-chaperone protein HscB homolog from Aeromonas salmonicida (strain A449).